The following is a 116-amino-acid chain: Vesicle-associated membrane protein 5 (116 aa).

The Cytoplasmic segment spans residues 1–72 (MAGKELERCQ…RWENARCRIY (72 aa)). In terms of domain architecture, v-SNARE coiled-coil homology spans 5 to 65 (ELERCQRQAD…KTLAQKKRWE (61 aa)). Residues Ser-41, Ser-48, and Ser-49 each carry the phosphoserine modification. Residues 73–93 (MGLAVGIALLILLIVLLVIFL) traverse the membrane as a helical; Anchor for type IV membrane protein segment. Residues 94-116 (PQSSKGSSAPQVQDAGPASGPGE) are Vesicular-facing. Residues 97 to 116 (SKGSSAPQVQDAGPASGPGE) are disordered.

It belongs to the synaptobrevin family.

The protein resides in the cell membrane. It localises to the endomembrane system. It is found in the golgi apparatus. The protein localises to the trans-Golgi network membrane. In terms of biological role, may participate in trafficking events that are associated with myogenesis, such as myoblast fusion and/or GLUT4 trafficking. The chain is Vesicle-associated membrane protein 5 (VAMP5) from Bos taurus (Bovine).